The primary structure comprises 207 residues: Large ribosomal subunit protein uL4 (207 aa).

The interval 49–78 is disordered; that stretch reads HAVKNRSAVSGGGRKPWRQKGTGRARQGSI.

It belongs to the universal ribosomal protein uL4 family. Part of the 50S ribosomal subunit.

Its function is as follows. One of the primary rRNA binding proteins, this protein initially binds near the 5'-end of the 23S rRNA. It is important during the early stages of 50S assembly. It makes multiple contacts with different domains of the 23S rRNA in the assembled 50S subunit and ribosome. In terms of biological role, forms part of the polypeptide exit tunnel. The chain is Large ribosomal subunit protein uL4 from Streptococcus gordonii (strain Challis / ATCC 35105 / BCRC 15272 / CH1 / DL1 / V288).